A 140-amino-acid polypeptide reads, in one-letter code: Large ribosomal subunit protein uL11 (140 aa).

This sequence belongs to the universal ribosomal protein uL11 family. In terms of assembly, part of the ribosomal stalk of the 50S ribosomal subunit. Interacts with L10 and the large rRNA to form the base of the stalk. L10 forms an elongated spine to which L12 dimers bind in a sequential fashion forming a multimeric L10(L12)X complex. One or more lysine residues are methylated.

Functionally, forms part of the ribosomal stalk which helps the ribosome interact with GTP-bound translation factors. This chain is Large ribosomal subunit protein uL11, found in Staphylococcus carnosus (strain TM300).